Here is a 943-residue protein sequence, read N- to C-terminus: Protein translocase subunit SecA (943 aa).

Residues Q90, 108–112 (GEGKT), and D509 contribute to the ATP site. The disordered stretch occupies residues 534 to 561 (KPDNEHKPPIPQQRNSKSGGGFSANVDS).

The protein belongs to the SecA family. Monomer and homodimer. Part of the essential Sec protein translocation apparatus which comprises SecA, SecYEG and auxiliary proteins SecDF. Other proteins may also be involved.

Its subcellular location is the cell inner membrane. It is found in the cellular thylakoid membrane. It localises to the cytoplasm. The catalysed reaction is ATP + H2O + cellular proteinSide 1 = ADP + phosphate + cellular proteinSide 2.. Functionally, part of the Sec protein translocase complex. Interacts with the SecYEG preprotein conducting channel. Has a central role in coupling the hydrolysis of ATP to the transfer of proteins into and across the cell membrane, serving as an ATP-driven molecular motor driving the stepwise translocation of polypeptide chains across the membrane. In terms of biological role, probably participates in protein translocation into and across both the cytoplasmic and thylakoid membranes in cyanobacterial cells. The chain is Protein translocase subunit SecA from Prochlorococcus marinus subsp. pastoris (strain CCMP1986 / NIES-2087 / MED4).